The primary structure comprises 198 residues: Segregation and condensation protein B (198 aa).

The interval proline 167–glutamate 198 is disordered. Residues proline 172–glutamate 181 show a composition bias toward acidic residues.

Belongs to the ScpB family. As to quaternary structure, homodimer. Homodimerization may be required to stabilize the binding of ScpA to the Smc head domains. Component of a cohesin-like complex composed of ScpA, ScpB and the Smc homodimer, in which ScpA and ScpB bind to the head domain of Smc. The presence of the three proteins is required for the association of the complex with DNA.

The protein localises to the cytoplasm. In terms of biological role, participates in chromosomal partition during cell division. May act via the formation of a condensin-like complex containing Smc and ScpA that pull DNA away from mid-cell into both cell halves. The sequence is that of Segregation and condensation protein B from Listeria welshimeri serovar 6b (strain ATCC 35897 / DSM 20650 / CCUG 15529 / CIP 8149 / NCTC 11857 / SLCC 5334 / V8).